A 426-amino-acid polypeptide reads, in one-letter code: Glucose-6-phosphate isomerase (426 aa).

The active-site Proton donor is E276. Active-site residues include H297 and K413.

This sequence belongs to the GPI family.

It is found in the cytoplasm. It carries out the reaction alpha-D-glucose 6-phosphate = beta-D-fructose 6-phosphate. The protein operates within carbohydrate biosynthesis; gluconeogenesis. It functions in the pathway carbohydrate degradation; glycolysis; D-glyceraldehyde 3-phosphate and glycerone phosphate from D-glucose: step 2/4. Functionally, catalyzes the reversible isomerization of glucose-6-phosphate to fructose-6-phosphate. The polypeptide is Glucose-6-phosphate isomerase (Mesoplasma florum (strain ATCC 33453 / NBRC 100688 / NCTC 11704 / L1) (Acholeplasma florum)).